We begin with the raw amino-acid sequence, 634 residues long: tRNA uridine 5-carboxymethylaminomethyl modification enzyme MnmG (634 aa).

FAD is bound at residue 14–19 (GGGHAG). 279–293 (GPRYCPSIEDKVVRF) provides a ligand contact to NAD(+).

It belongs to the MnmG family. In terms of assembly, homodimer. Heterotetramer of two MnmE and two MnmG subunits. Requires FAD as cofactor.

The protein localises to the cytoplasm. NAD-binding protein involved in the addition of a carboxymethylaminomethyl (cmnm) group at the wobble position (U34) of certain tRNAs, forming tRNA-cmnm(5)s(2)U34. The polypeptide is tRNA uridine 5-carboxymethylaminomethyl modification enzyme MnmG (Xanthomonas euvesicatoria pv. vesicatoria (strain 85-10) (Xanthomonas campestris pv. vesicatoria)).